A 119-amino-acid chain; its full sequence is Phosphoribosyl-AMP cyclohydrolase (119 aa).

Asp77 provides a ligand contact to Mg(2+). Zn(2+) is bound at residue Cys78. Asp79 and Asp81 together coordinate Mg(2+). Zn(2+) contacts are provided by Cys94 and Cys101.

Belongs to the PRA-CH family. Homodimer. It depends on Mg(2+) as a cofactor. The cofactor is Zn(2+).

It localises to the cytoplasm. It catalyses the reaction 1-(5-phospho-beta-D-ribosyl)-5'-AMP + H2O = 1-(5-phospho-beta-D-ribosyl)-5-[(5-phospho-beta-D-ribosylamino)methylideneamino]imidazole-4-carboxamide. It participates in amino-acid biosynthesis; L-histidine biosynthesis; L-histidine from 5-phospho-alpha-D-ribose 1-diphosphate: step 3/9. Catalyzes the hydrolysis of the adenine ring of phosphoribosyl-AMP. The polypeptide is Phosphoribosyl-AMP cyclohydrolase (Dinoroseobacter shibae (strain DSM 16493 / NCIMB 14021 / DFL 12)).